We begin with the raw amino-acid sequence, 502 residues long: 2-isopropylmalate synthase (502 aa).

4 residues coordinate Mn(2+): D1, H189, H191, and N225. Positions 1 to 254 (DGEQALQASL…STNINHKEIY (254 aa)) constitute a Pyruvate carboxyltransferase domain. Positions 379–502 (CLKFFSVQSI…VNKNLKNLKK (124 aa)) are regulatory domain.

This sequence belongs to the alpha-IPM synthase/homocitrate synthase family. LeuA type 1 subfamily. In terms of assembly, homodimer. It depends on Mn(2+) as a cofactor.

The protein resides in the cytoplasm. The catalysed reaction is 3-methyl-2-oxobutanoate + acetyl-CoA + H2O = (2S)-2-isopropylmalate + CoA + H(+). It participates in amino-acid biosynthesis; L-leucine biosynthesis; L-leucine from 3-methyl-2-oxobutanoate: step 1/4. Functionally, catalyzes the condensation of the acetyl group of acetyl-CoA with 3-methyl-2-oxobutanoate (2-ketoisovalerate) to form 3-carboxy-3-hydroxy-4-methylpentanoate (2-isopropylmalate). The chain is 2-isopropylmalate synthase from Buchnera aphidicola subsp. Uroleucon sonchi.